We begin with the raw amino-acid sequence, 715 residues long: Fatty acid oxidation complex subunit alpha (715 aa).

Residues 1-190 (MTTTSAFMLN…RAGLVDDVVP (190 aa)) are enoyl-CoA hydratase. A 3-hydroxyacyl-CoA dehydrogenase region spans residues 306–715 (GPLNSVGILG…WTNGETDQGN (410 aa)).

It in the N-terminal section; belongs to the enoyl-CoA hydratase/isomerase family. In the central section; belongs to the 3-hydroxyacyl-CoA dehydrogenase family. Heterotetramer of two alpha chains (FadJ) and two beta chains (FadI).

It is found in the cytoplasm. It carries out the reaction a (3S)-3-hydroxyacyl-CoA = a (2E)-enoyl-CoA + H2O. The enzyme catalyses a 4-saturated-(3S)-3-hydroxyacyl-CoA = a (3E)-enoyl-CoA + H2O. The catalysed reaction is a (3S)-3-hydroxyacyl-CoA + NAD(+) = a 3-oxoacyl-CoA + NADH + H(+). It catalyses the reaction (3S)-3-hydroxybutanoyl-CoA = (3R)-3-hydroxybutanoyl-CoA. It participates in lipid metabolism; fatty acid beta-oxidation. Functionally, catalyzes the formation of a hydroxyacyl-CoA by addition of water on enoyl-CoA. Also exhibits 3-hydroxyacyl-CoA epimerase and 3-hydroxyacyl-CoA dehydrogenase activities. The chain is Fatty acid oxidation complex subunit alpha from Salmonella schwarzengrund (strain CVM19633).